We begin with the raw amino-acid sequence, 424 residues long: Keratin, type I cytoskeletal 20 (424 aa).

The segment at 1 to 69 is head; the sequence is MDFSRRSFHR…TGGGDLFVGN (69 aa). Position 13 is a phosphoserine; by MAPKAPK2, MAPKAPK3 and PKC (Ser-13). The coil 1A stretch occupies residues 70–105; the sequence is EKMAMQNLNDRLASYLEKVRTLEQSNSKLEVQIKQW. The region spanning 70-381 is the IF rod domain; that stretch reads EKMAMQNLND…RLLEGEDVKT (312 aa). Residues 106-123 form a linker 1 region; the sequence is YETNAPRAGRDYSAYYRQ. The tract at residues 124 to 215 is coil 1B; that stretch reads IEELRSQIKD…KEHQEEVDGL (92 aa). The segment at 216 to 238 is linker 12; that stretch reads HKHLGNTVNVEVDAAPGLNLGVI. The tract at residues 239–377 is coil 2; it reads MNEMRQKYEV…ATYRRLLEGE (139 aa). A tail region spans residues 378-424; it reads DVKTTEYQLSTLEERDIKKTRKIKTVVQEVVDGKVVSSEVKEVEENI.

The protein belongs to the intermediate filament family. As to quaternary structure, heterotetramer of two type I and two type II keratins. Associates with KRT8. Hyperphosphorylation at Ser-13 occurs during the early stages of apoptosis but becomes less prominent during the later stages. Phosphorylation at Ser-13 also increases in response to stress brought on by cell injury. Post-translationally, proteolytically cleaved by caspases during apoptosis. Cleavage occurs at Asp-228. Expressed predominantly in the intestinal epithelium. Expressed in luminal cells of colonic mucosa. Also expressed in the Merkel cells of keratinized oral mucosa; specifically at the tips of some rete ridges of the gingival mucosa, in the basal layer of the palatal mucosa and in the taste buds of lingual mucosa.

The protein localises to the cytoplasm. In terms of biological role, plays a significant role in maintaining keratin filament organization in intestinal epithelia. When phosphorylated, plays a role in the secretion of mucin in the small intestine. In Homo sapiens (Human), this protein is Keratin, type I cytoskeletal 20 (KRT20).